The primary structure comprises 278 residues: Small ribosomal subunit protein uS2 (278 aa).

The interval Ile233–Lys257 is disordered.

Belongs to the universal ribosomal protein uS2 family.

This Bacteroides thetaiotaomicron (strain ATCC 29148 / DSM 2079 / JCM 5827 / CCUG 10774 / NCTC 10582 / VPI-5482 / E50) protein is Small ribosomal subunit protein uS2.